The chain runs to 87 residues: Small ribosomal subunit protein uS17 (87 aa).

It belongs to the universal ribosomal protein uS17 family. Part of the 30S ribosomal subunit.

One of the primary rRNA binding proteins, it binds specifically to the 5'-end of 16S ribosomal RNA. This chain is Small ribosomal subunit protein uS17, found in Bacillus cytotoxicus (strain DSM 22905 / CIP 110041 / 391-98 / NVH 391-98).